The primary structure comprises 579 residues: YTH domain-containing family protein 2 (579 aa).

The disordered stretch occupies residues 1-45 (MSASSLLEQRPKGQGNKVQNGSVHQKDGLNDDDFEPYLSPQARPN). Position 2 is an N-acetylserine (S2). A phosphoserine mark is found at S2, S4, S5, S22, S39, and S196. The segment at 2 to 384 (SASSLLEQRP…QAGSGSTPSE (383 aa)) is localization to mRNA processing bodies (P-bodies). Residues 247–387 (AKQQPKLKTK…SGSTPSEPHP (141 aa)) are disordered. Positions 291 to 316 (ALVQNIGQPTQGSPQPVGQQANNSPP) are enriched in polar residues. The span at 337–349 (AQLSVQQQAAQPT) shows a compositional bias: low complexity. Residue S359 is modified to Phosphoserine. The span at 359-371 (SGFGHNGVDGNGV) shows a compositional bias: gly residues. Over residues 372–383 (GQSQAGSGSTPS) the composition is skewed to polar residues. Residues 385 to 579 (PHPVLEKLRS…VKKERQGRGK (195 aa)) form an interaction with m6A-containing mRNAs region. Phosphoserine is present on S394. The region spanning 410-544 (GRVFIIKSYS…EKAKQVLKII (135 aa)) is the YTH domain. RNA contacts are provided by residues 416–418 (KSY), D422, 432–433 (WC), N462, W486, and W491.

This sequence belongs to the YTHDF family. YTHDF2 subfamily. As to quaternary structure, interacts with CNOT1; interaction is direct and promotes recruitment of the CCR4-NOT complex. Interacts with YTHDF3. Interacts with RIDA/HRSP12; interaction leads to recruitment of the ribonuclease P/MRP complex. Ubiquitinated by the SCF(SKP2) complex, leading to its degradation. Widely expressed, with highest expression in testis.

It is found in the cytoplasm. The protein localises to the cytosol. The protein resides in the P-body. Its subcellular location is the stress granule. It localises to the nucleus. In terms of biological role, specifically recognizes and binds N6-methyladenosine (m6A)-containing RNAs, and regulates their stability. M6A is a modification present at internal sites of mRNAs and some non-coding RNAs and plays a role in mRNA stability and processing. Acts as a regulator of mRNA stability by promoting degradation of m6A-containing mRNAs via interaction with the CCR4-NOT and ribonuclease P/MRP complexes, depending on the context. The YTHDF paralogs (YTHDF1, YTHDF2 and YTHDF3) share m6A-containing mRNAs targets and act redundantly to mediate mRNA degradation and cellular differentiation. M6A-containing mRNAs containing a binding site for RIDA/HRSP12 (5'-GGUUC-3') are preferentially degraded by endoribonucleolytic cleavage: cooperative binding of RIDA/HRSP12 and YTHDF2 to transcripts leads to recruitment of the ribonuclease P/MRP complex. Other m6A-containing mRNAs undergo deadenylation via direct interaction between YTHDF2 and CNOT1, leading to recruitment of the CCR4-NOT and subsequent deadenylation of m6A-containing mRNAs. Required maternally to regulate oocyte maturation: probably acts by binding to m6A-containing mRNAs, thereby regulating maternal transcript dosage during oocyte maturation, which is essential for the competence of oocytes to sustain early zygotic development. Also required during spermatogenesis: regulates spermagonial adhesion by promoting degradation of m6A-containing transcripts coding for matrix metallopeptidases. Also involved in hematopoietic stem cells specification by binding to m6A-containing mRNAs, leading to promote their degradation. Also acts as a regulator of neural development by promoting m6A-dependent degradation of neural development-related mRNA targets. Inhibits neural specification of induced pluripotent stem cells by binding to methylated neural-specific mRNAs and promoting their degradation, thereby restraining neural differentiation. Regulates circadian regulation of hepatic lipid metabolism: acts by promoting m6A-dependent degradation of PPARA transcripts. Regulates the innate immune response to infection by inhibiting the type I interferon response: acts by binding to m6A-containing IFNB transcripts and promoting their degradation. May also act as a promoter of cap-independent mRNA translation following heat shock stress: upon stress, relocalizes to the nucleus and specifically binds mRNAs with some m6A methylation mark at their 5'-UTR, protecting demethylation of mRNAs by FTO, thereby promoting cap-independent mRNA translation. Regulates mitotic entry by promoting the phase-specific m6A-dependent degradation of WEE1 transcripts. Promotes formation of phase-separated membraneless compartments, such as P-bodies or stress granules, by undergoing liquid-liquid phase separation upon binding to mRNAs containing multiple m6A-modified residues: polymethylated mRNAs act as a multivalent scaffold for the binding of YTHDF proteins, juxtaposing their disordered regions and thereby leading to phase separation. The resulting mRNA-YTHDF complexes then partition into different endogenous phase-separated membraneless compartments, such as P-bodies, stress granules or neuronal RNA granules. May also recognize and bind RNAs modified by C5-methylcytosine (m5C) and act as a regulator of rRNA processing. In Mus musculus (Mouse), this protein is YTH domain-containing family protein 2.